The chain runs to 153 residues: Regulator of sigma D (153 aa).

The protein belongs to the Rsd/AlgQ family. Interacts with RpoD.

Its subcellular location is the cytoplasm. Binds RpoD and negatively regulates RpoD-mediated transcription activation by preventing the interaction between the primary sigma factor RpoD with the catalytic core of the RNA polymerase and with promoter DNA. May be involved in replacement of the RNA polymerase sigma subunit from RpoD to RpoS during the transition from exponential growth to the stationary phase. This is Regulator of sigma D from Pectobacterium atrosepticum (strain SCRI 1043 / ATCC BAA-672) (Erwinia carotovora subsp. atroseptica).